The primary structure comprises 83 residues: Delta-conotoxin-like Ac6.2 (83 aa).

Residues 1–22 form the signal peptide; that stretch reads MKLTCVVIVAVLFLTAWTFVTA. Positions 23 to 51 are excised as a propeptide; the sequence is DDSRYGLKNLFPKARHEMKNPEASKLNKR. 3 disulfides stabilise this stretch: C54-C69, C61-C73, and C68-C78. P57 and P65 each carry 4-hydroxyproline.

It belongs to the conotoxin O1 superfamily. Expressed by the venom duct.

Its subcellular location is the secreted. Delta-conotoxins bind to site 6 of voltage-gated sodium channels (Nav) and inhibit the inactivation process. This Conus achatinus (Little frog cone) protein is Delta-conotoxin-like Ac6.2.